The sequence spans 412 residues: Serine--tRNA ligase (412 aa).

Position 228-230 (228-230 (TAE)) interacts with L-serine. 259 to 261 (RKE) is an ATP binding site. Glu-282 serves as a coordination point for L-serine. Position 346-349 (346-349 (EISS)) interacts with ATP. L-serine is bound at residue Ser-380.

Belongs to the class-II aminoacyl-tRNA synthetase family. Type-1 seryl-tRNA synthetase subfamily. In terms of assembly, homodimer. The tRNA molecule binds across the dimer.

Its subcellular location is the cytoplasm. It carries out the reaction tRNA(Ser) + L-serine + ATP = L-seryl-tRNA(Ser) + AMP + diphosphate + H(+). It catalyses the reaction tRNA(Sec) + L-serine + ATP = L-seryl-tRNA(Sec) + AMP + diphosphate + H(+). It participates in aminoacyl-tRNA biosynthesis; selenocysteinyl-tRNA(Sec) biosynthesis; L-seryl-tRNA(Sec) from L-serine and tRNA(Sec): step 1/1. Functionally, catalyzes the attachment of serine to tRNA(Ser). Is also able to aminoacylate tRNA(Sec) with serine, to form the misacylated tRNA L-seryl-tRNA(Sec), which will be further converted into selenocysteinyl-tRNA(Sec). This is Serine--tRNA ligase from Aliarcobacter butzleri (strain RM4018) (Arcobacter butzleri).